The following is a 349-amino-acid chain: Core protein VP7 (349 aa).

N-linked (GlcNAc...) asparagine; by host glycosylation is present at Asn45.

It belongs to the orbivirus VP7 family. In terms of assembly, homotrimer.

It localises to the virion. In terms of biological role, major structural core protein; binds to structural protein VP3. Constitutes the surface of the AHSV core. The polypeptide is Core protein VP7 (Segment-7) (Camelus dromedarius (Dromedary)).